A 201-amino-acid polypeptide reads, in one-letter code: Chromophore lyase CpcT/CpeT (201 aa).

Belongs to the CpcT/CpeT biliprotein lyase family.

Its subcellular location is the plastid. The protein localises to the organellar chromatophore. In terms of biological role, covalently attaches a chromophore to Cys residue(s) of phycobiliproteins. This Paulinella chromatophora protein is Chromophore lyase CpcT/CpeT.